We begin with the raw amino-acid sequence, 305 residues long: tRNA pseudouridine synthase B (305 aa).

Residue Asp48 is the Nucleophile of the active site.

This sequence belongs to the pseudouridine synthase TruB family. Type 1 subfamily.

The enzyme catalyses uridine(55) in tRNA = pseudouridine(55) in tRNA. Responsible for synthesis of pseudouridine from uracil-55 in the psi GC loop of transfer RNAs. This is tRNA pseudouridine synthase B from Pseudomonas fluorescens (strain ATCC BAA-477 / NRRL B-23932 / Pf-5).